The chain runs to 520 residues: Developmental regulatory protein wetA (520 aa).

4 disordered regions span residues 110–149, 260–294, 388–453, and 471–496; these read ATHALSTSPSTPPATPRRKPTQSALITPKSIRHRCPNERR, HPSSSTLTNSSPSSADDMFSSSHSSDPHSLSSWQS, TTSQ…GSNK, and LTGVAPSGSSKTKARREQEARDRRRK. The segment covering 261–294 has biased composition (low complexity); the sequence is PSSSTLTNSSPSSADDMFSSSHSSDPHSLSSWQS. A compositionally biased stretch (polar residues) spans 388 to 401; sequence TTSQVHNVSRSPSL. Residues 420–429 are compositionally biased toward basic residues; the sequence is PVHRRTHSRK. The span at 436–453 shows a compositional bias: low complexity; the sequence is NAPKPAKASGSSSRGSNK.

The protein belongs to the wetA family.

Its function is as follows. BrlA, abaA and wetA are pivotal regulators of conidiophore development and conidium maturation. They act individually and together to regulate their own expression and that of numerous other sporulation-specific genes. Plays a crucial role in pigmentation and conidial cell wall integrity. The polypeptide is Developmental regulatory protein wetA (Penicillium digitatum (strain PHI26 / CECT 20796) (Green mold)).